Here is a 178-residue protein sequence, read N- to C-terminus: Large ribosomal subunit protein uL6 (178 aa).

The protein belongs to the universal ribosomal protein uL6 family. As to quaternary structure, part of the 50S ribosomal subunit.

In terms of biological role, this protein binds to the 23S rRNA, and is important in its secondary structure. It is located near the subunit interface in the base of the L7/L12 stalk, and near the tRNA binding site of the peptidyltransferase center. In Coxiella burnetii (strain CbuG_Q212) (Coxiella burnetii (strain Q212)), this protein is Large ribosomal subunit protein uL6.